An 83-amino-acid chain; its full sequence is Large ribosomal subunit protein uL23 (83 aa).

Belongs to the universal ribosomal protein uL23 family. Part of the 50S ribosomal subunit. Contacts protein L29.

Its function is as follows. Binds to 23S rRNA. One of the proteins that surrounds the polypeptide exit tunnel on the outside of the ribosome. The polypeptide is Large ribosomal subunit protein uL23 (Archaeoglobus fulgidus (strain ATCC 49558 / DSM 4304 / JCM 9628 / NBRC 100126 / VC-16)).